Here is a 192-residue protein sequence, read N- to C-terminus: MSLRIVHYNDPVLRRKGEKITAFDKALSQLAKEMLATMQEAAGIGLAAQQIGRPVQLCVVDLRRAEIDFTWELDGAKPPLDLIMPMIITNPEITPDRETDVYLVEEGCLSFPKIRGDVPRPDAITVRYQDEHGTPHTLHCDGLLARCIQHEVDHLNGVLFIDRMEKKTRAAIDADVKTLAKITRAAAKLNPA.

Fe cation contacts are provided by Cys-108 and His-150. Glu-151 is an active-site residue. Residue His-154 participates in Fe cation binding.

Belongs to the polypeptide deformylase family. The cofactor is Fe(2+).

The catalysed reaction is N-terminal N-formyl-L-methionyl-[peptide] + H2O = N-terminal L-methionyl-[peptide] + formate. Removes the formyl group from the N-terminal Met of newly synthesized proteins. Requires at least a dipeptide for an efficient rate of reaction. N-terminal L-methionine is a prerequisite for activity but the enzyme has broad specificity at other positions. This chain is Peptide deformylase, found in Opitutus terrae (strain DSM 11246 / JCM 15787 / PB90-1).